The following is an 89-amino-acid chain: Small ribosomal subunit protein uS15 (89 aa).

This sequence belongs to the universal ribosomal protein uS15 family. In terms of assembly, part of the 30S ribosomal subunit. Forms a bridge to the 50S subunit in the 70S ribosome, contacting the 23S rRNA.

Its function is as follows. One of the primary rRNA binding proteins, it binds directly to 16S rRNA where it helps nucleate assembly of the platform of the 30S subunit by binding and bridging several RNA helices of the 16S rRNA. Functionally, forms an intersubunit bridge (bridge B4) with the 23S rRNA of the 50S subunit in the ribosome. This chain is Small ribosomal subunit protein uS15, found in Parafrankia sp. (strain EAN1pec).